The chain runs to 120 residues: Cell cycle protein GpsB (120 aa).

Positions 34–74 form a coiled coil; the sequence is LDDVIKDYDTYNKELERLNDENERLRAKVDELNRQVEVGSS. Residues 69–90 form a disordered region; that stretch reads VEVGSSMSNQTASRQPVSSATN. Residues 71–90 are compositionally biased toward polar residues; that stretch reads VGSSMSNQTASRQPVSSATN.

It belongs to the GpsB family. As to quaternary structure, forms polymers through the coiled coil domains. Interacts with PBP1, MreC and EzrA.

The protein localises to the cytoplasm. Its function is as follows. Divisome component that associates with the complex late in its assembly, after the Z-ring is formed, and is dependent on DivIC and PBP2B for its recruitment to the divisome. Together with EzrA, is a key component of the system that regulates PBP1 localization during cell cycle progression. Its main role could be the removal of PBP1 from the cell pole after pole maturation is completed. Also contributes to the recruitment of PBP1 to the division complex. Not essential for septum formation. The protein is Cell cycle protein GpsB of Limosilactobacillus reuteri (strain DSM 20016) (Lactobacillus reuteri).